The sequence spans 265 residues: MFNLRDSEKLFIPFITAGDPLPDISVELAISLQNAGASALEIGVPYTDPLADGPVIQRASKRALENGMNIVKAIELGGKMKKNGVHIPIILFTYYNPVLQLEKEYFFALLRENDIDGLLVPDLPLEESALLQMTCKKENIAYISLVAPTSEDRLKIITEQACGFVYCVSSLGVTGVRSEFDPSVYSFIRKVKEFSSVPVAVGFGISNRKQVDGMNEISDGVVVGSALVKKIEELKTKLVNPGTRADALLEFEEYAKTFGRLYSVK.

Catalysis depends on proton acceptor residues E41 and D52.

It belongs to the TrpA family. Tetramer of two alpha and two beta chains.

It carries out the reaction (1S,2R)-1-C-(indol-3-yl)glycerol 3-phosphate + L-serine = D-glyceraldehyde 3-phosphate + L-tryptophan + H2O. Its pathway is amino-acid biosynthesis; L-tryptophan biosynthesis; L-tryptophan from chorismate: step 5/5. The alpha subunit is responsible for the aldol cleavage of indoleglycerol phosphate to indole and glyceraldehyde 3-phosphate. The protein is Tryptophan synthase alpha chain of Bacillus velezensis (strain DSM 23117 / BGSC 10A6 / LMG 26770 / FZB42) (Bacillus amyloliquefaciens subsp. plantarum).